The following is a 300-amino-acid chain: Ribosomal protein bS6--L-glutamate ligase (300 aa).

The ATP-grasp domain maps to 104–287 (MQLLARQGID…IAGKMIRWIE (184 aa)). ATP contacts are provided by residues Lys-141, 178-179 (EY), Asp-187, and 211-213 (RSN). Mg(2+)-binding residues include Asp-248, Glu-260, and Asn-262. The Mn(2+) site is built by Asp-248, Glu-260, and Asn-262.

Belongs to the RimK family. Mg(2+) is required as a cofactor. It depends on Mn(2+) as a cofactor.

In terms of biological role, an L-glutamate ligase that catalyzes the ATP-dependent post-translational addition of glutamate residues to the C-terminus of ribosomal protein bS6 (RpsF). Is also able to catalyze the synthesis of poly-alpha-glutamate in vitro, via ATP hydrolysis from unprotected glutamate as substrate. The number of glutamate residues added to either RpsF or to poly-alpha-glutamate changes with pH. The polypeptide is Ribosomal protein bS6--L-glutamate ligase (Shigella dysenteriae serotype 1 (strain Sd197)).